Reading from the N-terminus, the 126-residue chain is Cystatin-like cysteine protease inhibitor EPIC1 (126 aa).

Residues 1 to 21 form the signal peptide; that stretch reads MTFLRPILALLAATALVTTSA. An N-linked (GlcNAc...) asparagine glycan is attached at asparagine 46. A Secondary area of contact motif is present at residues 69–73; it reads QVVSG.

The protein belongs to the cystatin family. As to quaternary structure, interacts with the host papain-like cysteine protease RCR3. Interacts with the host papain-like cysteine protease C14.

The protein resides in the secreted. Functionally, secreted effector that interacts with and inhibits the pathogenesis-related papain-like cysteine proteases C14 and RCR3 of host plants. Inhibition of host proteases by a pathogen extracellular protease inhibitor forms a specific type of defense-counterdefense mechanism between plants and microbial pathogens. This Phytophthora infestans (Potato late blight agent) protein is Cystatin-like cysteine protease inhibitor EPIC1.